A 711-amino-acid polypeptide reads, in one-letter code: Long-chain-fatty-acid--CoA ligase 4 (711 aa).

Residues 8–28 traverse the membrane as a helical; Signal-anchor for type III membrane protein segment; sequence LTIVLLPVHLLITIYSALIFI. Over 29–711 the chain is Cytoplasmic; sequence PWYFLTNAKK…KDIERMYGGK (683 aa). A Phosphoserine modification is found at Ser-447.

The protein belongs to the ATP-dependent AMP-binding enzyme family. It depends on Mg(2+) as a cofactor.

It localises to the mitochondrion outer membrane. The protein resides in the peroxisome membrane. It is found in the microsome membrane. The protein localises to the endoplasmic reticulum membrane. Its subcellular location is the cell membrane. The enzyme catalyses a long-chain fatty acid + ATP + CoA = a long-chain fatty acyl-CoA + AMP + diphosphate. The catalysed reaction is (5Z,8Z,11Z,14Z)-eicosatetraenoate + ATP + CoA = (5Z,8Z,11Z,14Z)-eicosatetraenoyl-CoA + AMP + diphosphate. It carries out the reaction 15-hydroxy-(5Z,8Z,11Z,13E)-eicosatetraenoate + ATP + CoA = 15-hydroxy-(5Z,8Z,11Z,13E)-eicosatetraenoyl-CoA + AMP + diphosphate. It catalyses the reaction 12-hydroxy-(5Z,8Z,10E,14Z)-eicosatetraenoate + ATP + CoA = 12-hydroxy-(5Z,8Z,10E,14Z)-eicosatetraenoyl-CoA + AMP + diphosphate. The enzyme catalyses 5-hydroxy-(6E,8Z,11Z,14Z)-eicosatetraenoate + ATP + CoA = 5-hydroxy-(6E,8Z,11Z,14Z)-eicosatetraenoyl-CoA + AMP + diphosphate. The catalysed reaction is 5,6-epoxy-(8Z,11Z,14Z)-eicosatrienoate + ATP + CoA = 5,6-epoxy-(8Z,11Z,14Z)-eicosatrienoyl-CoA + AMP + diphosphate. It carries out the reaction 14,15-epoxy-(5Z,8Z,11Z)-eicosatrienoate + ATP + CoA = 14,15-epoxy-(5Z,8Z,11Z)-eicosatrienoyl-CoA + AMP + diphosphate. It catalyses the reaction 11,12-epoxy-(5Z,8Z,14Z)-eicosatrienoate + ATP + CoA = 11,12-epoxy-(5Z,8Z,14Z)-eicosatrienoyl-CoA + AMP + diphosphate. The enzyme catalyses 8,9-epoxy-(5Z,11Z,14Z)-eicosatrienoate + ATP + CoA = 8,9-epoxy-(5Z,11Z,14Z)-eicosatrienoyl-CoA + AMP + diphosphate. The catalysed reaction is hexadecanoate + ATP + CoA = hexadecanoyl-CoA + AMP + diphosphate. It carries out the reaction (E)-hexadec-2-enoate + ATP + CoA = (2E)-hexadecenoyl-CoA + AMP + diphosphate. Both triacsin C and rosiglitazone inhibit arachidonoyl-CoA ligase activity. Functionally, catalyzes the conversion of long-chain fatty acids to their active form acyl-CoA for both synthesis of cellular lipids, and degradation via beta-oxidation. Preferentially activates arachidonate and eicosapentaenoate as substrates. Preferentially activates 8,9-EET &gt; 14,15-EET &gt; 5,6-EET &gt; 11,12-EET. Modulates glucose-stimulated insulin secretion by regulating the levels of unesterified EETs. Modulates prostaglandin E2 secretion. This Rattus norvegicus (Rat) protein is Long-chain-fatty-acid--CoA ligase 4 (Acsl4).